The primary structure comprises 332 residues: Nucleotide-binding protein RC1_2868 (332 aa).

The disordered stretch occupies residues 1–27 (MTGQPLTMETAAGADAGTGAATHPADG). Low complexity predominate over residues 10 to 22 (TAAGADAGTGAAT). 36–43 (GMSGGGLS) lines the ATP pocket. 82-85 (DSRT) contributes to the GTP binding site. Basic and acidic residues-rich tracts occupy residues 302 to 312 (GHRDLDRRHPA) and 322 to 332 (VASRETPEEHR). The segment at 302 to 332 (GHRDLDRRHPAPEPAPPWREVASRETPEEHR) is disordered.

Belongs to the RapZ-like family.

Functionally, displays ATPase and GTPase activities. The polypeptide is Nucleotide-binding protein RC1_2868 (Rhodospirillum centenum (strain ATCC 51521 / SW)).